We begin with the raw amino-acid sequence, 221 residues long: MKLNKSTIEVLKNFAGINNGMVIHAGSRIRTQDNLNKQIAYADIEDSFPVEFAVYDLGEFLSALNLLDNAELDFQEKFVVVTGDGGTKLTFQYANAEFVTEAPEKVNFPTELDGGAEFDLKGEDLQRVKKASATLGLSDICVRTEAGSTAITLSATDAQGSSKHTFEINVGEADVDTEFKFFFKSERLNIVDQDYKVSIHPAGISRFLGLSLEYFIATEAL.

This sequence belongs to the Tevenvirinae sliding clamp family. In terms of assembly, homotrimer. Interacts with the viral DNA polymerase; this interaction constitutes the polymerase holoenzyme. Interacts with the sliding-clamp-loader; this interaction allows the sliding-clamp-loader to open the sliding clamp. Interacts with the viral DNA ligase. Part of the replicase complex that includes the DNA polymerase, the polymerase clamp, the clamp loader complex, the single-stranded DNA binding protein, the primase, the helicase and the helicase assembly factor. Interacts with the viral RNA polymerase (RNAP). Part of the transcription activation complex containing host RNAP, the viral RNA polymerase sigma-like factor, the late transcription coactivator, and the sliding clamp.

In terms of biological role, sliding clamp that encircles the genomic DNA and links the DNA polymerase to the template to control the processivity of DNA synthesis. Responsible for tethering the catalytic subunit of DNA polymerase to DNA during high-speed replication. Interaction with the sliding-clamp-loader opens the sliding clamp so that it can be loaded around the DNA template. During transcription, encircles the DNA and tethers host RNA polymerase (RNAP) to it. The sequence is that of Sliding clamp from Vibrio phage KVP40 (isolate Vibrio parahaemolyticus/Japan/Matsuzaki/1991) (KVP40).